A 345-amino-acid chain; its full sequence is GTPase Obg (345 aa).

Positions 1 to 159 (MKFIDEAIIK…RTLRLELKLL (159 aa)) constitute an Obg domain. Positions 127–148 (NARFKSSTNRAPRKTTQGKPGE) are disordered. Over residues 130 to 144 (FKSSTNRAPRKTTQG) the composition is skewed to polar residues. Positions 160–334 (ADVGLLGLPN…LIHAVMQYLE (175 aa)) constitute an OBG-type G domain. Residues 166–173 (GLPNAGKS), 191–195 (FTTLH), 213–216 (DIPG), 284–287 (NKTD), and 315–317 (SAL) each bind GTP. Mg(2+)-binding residues include Ser-173 and Thr-193.

This sequence belongs to the TRAFAC class OBG-HflX-like GTPase superfamily. OBG GTPase family. As to quaternary structure, monomer. The cofactor is Mg(2+).

Its subcellular location is the cytoplasm. An essential GTPase which binds GTP, GDP and possibly (p)ppGpp with moderate affinity, with high nucleotide exchange rates and a fairly low GTP hydrolysis rate. Plays a role in control of the cell cycle, stress response, ribosome biogenesis and in those bacteria that undergo differentiation, in morphogenesis control. The polypeptide is GTPase Obg (Nitrosococcus oceani (strain ATCC 19707 / BCRC 17464 / JCM 30415 / NCIMB 11848 / C-107)).